The sequence spans 421 residues: F-box/kelch-repeat protein At1g26930 (421 aa).

The segment at 54 to 73 (TDSSEGEDNGSSSDSGTLIP) is disordered. In terms of domain architecture, F-box spans 70-117 (TLIPGMNRDDSLSCLIRCSRADYCSIASVNRSLRSLIRSGEIYRLRRL). Kelch repeat units lie at residues 114 to 167 (LRRL…LAVG), 169 to 212 (DLLV…SYGE), 213 to 260 (IAVL…FMDG), 261 to 312 (KFYV…MSAA), and 320 to 366 (AVVN…GLAF).

The protein is F-box/kelch-repeat protein At1g26930 of Arabidopsis thaliana (Mouse-ear cress).